The sequence spans 320 residues: Cytochrome f (320 aa).

The first 35 residues, 1–35 (MQTRKTLSWIKEEITRSISVSLMIYIITGAYISNA), serve as a signal peptide directing secretion. Positions 36, 56, 59, and 60 each coordinate heme. Residues 286–306 (VQGLLFFLASVILAQIFLVLK) form a helical membrane-spanning segment.

The protein belongs to the cytochrome f family. The 4 large subunits of the cytochrome b6-f complex are cytochrome b6, subunit IV (17 kDa polypeptide, petD), cytochrome f and the Rieske protein, while the 4 small subunits are PetG, PetL, PetM and PetN. The complex functions as a dimer. Heme serves as cofactor.

Its subcellular location is the plastid. It localises to the chloroplast thylakoid membrane. In terms of biological role, component of the cytochrome b6-f complex, which mediates electron transfer between photosystem II (PSII) and photosystem I (PSI), cyclic electron flow around PSI, and state transitions. The protein is Cytochrome f of Populus alba (White poplar).